We begin with the raw amino-acid sequence, 179 residues long: Large ribosomal subunit protein uL5 (179 aa).

This sequence belongs to the universal ribosomal protein uL5 family. Part of the 50S ribosomal subunit; part of the 5S rRNA/L5/L18/L25 subcomplex. Contacts the 5S rRNA and the P site tRNA. Forms a bridge to the 30S subunit in the 70S ribosome.

In terms of biological role, this is one of the proteins that bind and probably mediate the attachment of the 5S RNA into the large ribosomal subunit, where it forms part of the central protuberance. In the 70S ribosome it contacts protein S13 of the 30S subunit (bridge B1b), connecting the 2 subunits; this bridge is implicated in subunit movement. Contacts the P site tRNA; the 5S rRNA and some of its associated proteins might help stabilize positioning of ribosome-bound tRNAs. The sequence is that of Large ribosomal subunit protein uL5 from Yersinia pestis.